The primary structure comprises 210 residues: Riboflavin kinase (210 aa).

Residues 1–11 (MRPSNPRPPVT) are compositionally biased toward pro residues. The disordered stretch occupies residues 1–24 (MRPSNPRPPVTGPDSGPEAPFPIR). Residues T44 and N46 each contribute to the Mg(2+) site. E113 serves as the catalytic Nucleophile.

Belongs to the flavokinase family. The cofactor is Zn(2+). Mg(2+) is required as a cofactor.

The enzyme catalyses riboflavin + ATP = FMN + ADP + H(+). Its pathway is cofactor biosynthesis; FMN biosynthesis; FMN from riboflavin (ATP route): step 1/1. In terms of biological role, catalyzes the phosphorylation of riboflavin (vitamin B2) to form flavin mononucleotide (FMN) coenzyme. This chain is Riboflavin kinase (fmn1), found in Emericella nidulans (strain FGSC A4 / ATCC 38163 / CBS 112.46 / NRRL 194 / M139) (Aspergillus nidulans).